We begin with the raw amino-acid sequence, 509 residues long: Telomeric repeat-binding factor 2-interacting protein 1 (509 aa).

One can recognise a BRCT domain in the interval M1 to L91. Residues G93–S168 form a disordered region. A compositionally biased stretch (polar residues) spans V115–Q127. Basic and acidic residues predominate over residues R159–S168. The region spanning R185–L239 is the Myb-like domain. Disordered stretches follow at residues L249–D359 and D399–G423. 2 stretches are compositionally biased toward basic and acidic residues: residues G286–S296 and V321–E344. Residues P401–A418 are compositionally biased toward polar residues. The Nuclear localization signal signature appears at Q493–S509.

It belongs to the RAP1 family. As to quaternary structure, homodimer. Component of the shelterin complex (telosome). Interacts with terf2; the interaction is direct.

The protein localises to the nucleus. Its subcellular location is the chromosome. It is found in the telomere. In terms of biological role, acts both as a regulator of telomere function and as a transcription regulator. Involved in the regulation of telomere length and protection as a component of the shelterin complex (telosome). Does not bind DNA directly: recruited to telomeric double-stranded 5'-TTAGGG-3' repeats via its interaction with terf2. Independently of its function in telomeres, also acts as a transcription regulator: recruited to extratelomeric 5'-TTAGGG-3' sites via its association with terf2 or other factors, and regulates gene expression. The sequence is that of Telomeric repeat-binding factor 2-interacting protein 1 (terf2ip) from Xenopus tropicalis (Western clawed frog).